Consider the following 210-residue polypeptide: Imidazole glycerol phosphate synthase subunit HisH (210 aa).

The Glutamine amidotransferase type-1 domain maps to 1–210 (MIAILDYGMG…KLLENFIRFI (210 aa)). The Nucleophile role is filled by Cys-79. Residues His-191 and Glu-193 contribute to the active site.

As to quaternary structure, heterodimer of HisH and HisF.

It localises to the cytoplasm. The enzyme catalyses 5-[(5-phospho-1-deoxy-D-ribulos-1-ylimino)methylamino]-1-(5-phospho-beta-D-ribosyl)imidazole-4-carboxamide + L-glutamine = D-erythro-1-(imidazol-4-yl)glycerol 3-phosphate + 5-amino-1-(5-phospho-beta-D-ribosyl)imidazole-4-carboxamide + L-glutamate + H(+). It carries out the reaction L-glutamine + H2O = L-glutamate + NH4(+). The protein operates within amino-acid biosynthesis; L-histidine biosynthesis; L-histidine from 5-phospho-alpha-D-ribose 1-diphosphate: step 5/9. Functionally, IGPS catalyzes the conversion of PRFAR and glutamine to IGP, AICAR and glutamate. The HisH subunit catalyzes the hydrolysis of glutamine to glutamate and ammonia as part of the synthesis of IGP and AICAR. The resulting ammonia molecule is channeled to the active site of HisF. The polypeptide is Imidazole glycerol phosphate synthase subunit HisH (Leptospira interrogans serogroup Icterohaemorrhagiae serovar copenhageni (strain Fiocruz L1-130)).